A 1103-amino-acid polypeptide reads, in one-letter code: Retinal guanylyl cyclase 2 (1103 aa).

Residues 1–46 (MFLAPWPFSHLMLWFVTLGRQRGQHGLASFKLLWCLWLLVLMSLPL) form the signal peptide. At 47–465 (QVWAPPYKIG…DGRICQGGIN (419 aa)) the chain is on the extracellular side. The cysteines at positions 104 and 132 are disulfide-linked. A helical membrane pass occupies residues 466–490 (PTFALMVCLALLIALLSINGFAYFI). Residues 491–1103 (RHRINKIQLI…FQRRKQKSSW (613 aa)) lie on the Cytoplasmic side of the membrane. The region spanning 532–812 (FQITSEVQSG…DEIFNQFKTF (281 aa)) is the Protein kinase domain. Residues 884–1014 (TLYFSDIVGF…DTVNTASRME (131 aa)) form the Guanylate cyclase domain.

This sequence belongs to the adenylyl cyclase class-4/guanylyl cyclase family. In terms of assembly, homodimer. Interacts with RD3; promotes the exit of GUCY2F from the endoplasmic reticulum and its trafficking to the photoreceptor outer segments. In terms of processing, there are 9 conserved cysteine residues in sensory guanylate cyclases, 6 in the extracellular domain, which may be involved in intra- or interchain disulfide bonds. Expressed specifically in retina.

It localises to the membrane. It is found in the photoreceptor outer segment membrane. The enzyme catalyses GTP = 3',5'-cyclic GMP + diphosphate. With respect to regulation, activated by GUCA1B when free calcium ions concentration is low, and inhibited by GUCA1B when free calcium ions concentration is high. Inhibited by RD3. In terms of biological role, responsible for the synthesis of cyclic GMP (cGMP) in rods and cones of photoreceptors. Plays an essential role in phototransduction, by mediating cGMP replenishment. May also participate in the trafficking of membrane-asociated proteins to the photoreceptor outer segment membrane. The chain is Retinal guanylyl cyclase 2 (GUCY2F) from Bos taurus (Bovine).